A 231-amino-acid polypeptide reads, in one-letter code: Orotidine 5'-phosphate decarboxylase (231 aa).

Residues Asp11, Lys33, 60-69 (DLKLHDIPNT), Thr119, Arg181, Gln190, Gly210, and Arg211 each bind substrate. Lys62 functions as the Proton donor in the catalytic mechanism.

This sequence belongs to the OMP decarboxylase family. Type 1 subfamily. As to quaternary structure, homodimer.

It catalyses the reaction orotidine 5'-phosphate + H(+) = UMP + CO2. It participates in pyrimidine metabolism; UMP biosynthesis via de novo pathway; UMP from orotate: step 2/2. Functionally, catalyzes the decarboxylation of orotidine 5'-monophosphate (OMP) to uridine 5'-monophosphate (UMP). This Malacoplasma penetrans (strain HF-2) (Mycoplasma penetrans) protein is Orotidine 5'-phosphate decarboxylase.